We begin with the raw amino-acid sequence, 469 residues long: Proline--tRNA ligase (469 aa).

It belongs to the class-II aminoacyl-tRNA synthetase family. ProS type 3 subfamily. Homodimer.

The protein localises to the cytoplasm. The catalysed reaction is tRNA(Pro) + L-proline + ATP = L-prolyl-tRNA(Pro) + AMP + diphosphate. Its function is as follows. Catalyzes the attachment of proline to tRNA(Pro) in a two-step reaction: proline is first activated by ATP to form Pro-AMP and then transferred to the acceptor end of tRNA(Pro). The protein is Proline--tRNA ligase of Methanobrevibacter smithii (strain ATCC 35061 / DSM 861 / OCM 144 / PS).